The sequence spans 206 residues: Cytochrome c (206 aa).

A run of 3 helical transmembrane segments spans residues 10–30 (IALA…VSFL), 49–69 (FMGW…LGKM), and 76–96 (KWFL…FLSL). Cys-152, Cys-155, His-156, and Met-182 together coordinate heme.

Monomer. Component of the photosynthetic reaction center composed of protein subunits PscA, PscC, PscB and PscD. The reaction center interacts with FmoA (which forms the Fenna-Matthews-Olson (FMO) complex). The reaction center/FmoA complex has two PscA subunits, one PscB and one PscD subunit, probably two FmoA complexes and at least one PscC subunit. In terms of processing, binds 1 heme group per subunit.

The protein resides in the cell inner membrane. Monoheme cytochrome which is the immediate electron donor to P840 of the photosynthetic reaction center complex. In Chlorobaculum tepidum (strain ATCC 49652 / DSM 12025 / NBRC 103806 / TLS) (Chlorobium tepidum), this protein is Cytochrome c (pscC).